The sequence spans 171 residues: Translationally-controlled tumor protein homolog (171 aa).

In terms of domain architecture, TCTP spans 1-171 (MIIYRDCISQ…FKDGLEMEKC (171 aa)).

Belongs to the TCTP family. As to expression, expressed by the venom gland.

The protein localises to the secreted. Functionally, venom protein that causes edema, enhances vascular permeability and is likely related to the inflammatory activity of the venom. The chain is Translationally-controlled tumor protein homolog from Micrurus fulvius (Eastern coral snake).